The sequence spans 248 residues: HTH-type transcriptional regulator GgaR (248 aa).

The HTH gntR-type domain maps to Thr-22 to Ile-90. A DNA-binding region (H-T-H motif) is located at residues Glu-50 to Gln-69.

With respect to regulation, senses ADP-glucose (ADPG), which is the substrate for glycogen elongation, as an effector. In the presence of ADPG, GgaR becomes inactive and derepresses the yegTUV operon, leading to glycogen accumulation. In contrast, in the absence of glucose, the concentration of ADPG decreases, GgaR becomes active, and glycogen accumulation is repressed. Functionally, transcriptional regulator that regulates glycogen accumulation in response to the amount of glucose available to the cell. Acts as a repressor of the yegTUV operon, which may be involved in glycogen accumulation. The sequence is that of HTH-type transcriptional regulator GgaR from Escherichia coli O6:H1 (strain CFT073 / ATCC 700928 / UPEC).